The chain runs to 659 residues: DNA ligase (659 aa).

NAD(+) is bound by residues 32-36 (DFEYD), 81-82 (SL), and glutamate 111. Lysine 113 acts as the N6-AMP-lysine intermediate in catalysis. The NAD(+) site is built by arginine 134, glutamate 168, lysine 280, and lysine 304. Positions 398, 401, 416, and 421 each coordinate Zn(2+). Residues 585–655 (ETNSIYFQKR…KELNIPIINE (71 aa)) form the BRCT domain.

Belongs to the NAD-dependent DNA ligase family. LigA subfamily. The cofactor is Mg(2+). Mn(2+) serves as cofactor.

The enzyme catalyses NAD(+) + (deoxyribonucleotide)n-3'-hydroxyl + 5'-phospho-(deoxyribonucleotide)m = (deoxyribonucleotide)n+m + AMP + beta-nicotinamide D-nucleotide.. In terms of biological role, DNA ligase that catalyzes the formation of phosphodiester linkages between 5'-phosphoryl and 3'-hydroxyl groups in double-stranded DNA using NAD as a coenzyme and as the energy source for the reaction. It is essential for DNA replication and repair of damaged DNA. The sequence is that of DNA ligase from Mycoplasma genitalium (strain ATCC 33530 / DSM 19775 / NCTC 10195 / G37) (Mycoplasmoides genitalium).